Consider the following 215-residue polypeptide: Oligoribonuclease (215 aa).

In terms of domain architecture, Exonuclease spans 5–170 (LVWIDCEMTG…ADIHESIREL (166 aa)). Residue Tyr-127 is part of the active site. Positions 196–215 (LDEGKDAPGPSDSASAPPTG) are disordered. Residues 202 to 215 (APGPSDSASAPPTG) are compositionally biased toward low complexity.

It belongs to the oligoribonuclease family.

The protein resides in the cytoplasm. Functionally, 3'-to-5' exoribonuclease specific for small oligoribonucleotides. The chain is Oligoribonuclease from Mycobacterium avium (strain 104).